The chain runs to 318 residues: GTP cyclohydrolase MptA (318 aa).

The protein belongs to the GTP cyclohydrolase IV family. As to quaternary structure, homodimer. The cofactor is Fe(2+).

The catalysed reaction is GTP + H2O = 7,8-dihydroneopterin 2',3'-cyclic phosphate + formate + diphosphate + H(+). The protein operates within cofactor biosynthesis; 5,6,7,8-tetrahydromethanopterin biosynthesis. Its function is as follows. Converts GTP to 7,8-dihydro-D-neopterin 2',3'-cyclic phosphate, the first intermediate in the biosynthesis of coenzyme methanopterin. The polypeptide is GTP cyclohydrolase MptA (Methanosarcina acetivorans (strain ATCC 35395 / DSM 2834 / JCM 12185 / C2A)).